A 217-amino-acid polypeptide reads, in one-letter code: Small ribosomal subunit protein uS3 (217 aa).

One can recognise a KH type-2 domain in the interval 40-110 (IRDLINKGFN…EVYINIHEVR (71 aa)).

This sequence belongs to the universal ribosomal protein uS3 family. In terms of assembly, part of the 30S ribosomal subunit. Forms a tight complex with proteins S10 and S14.

Binds the lower part of the 30S subunit head. Binds mRNA in the 70S ribosome, positioning it for translation. In Rickettsia felis (strain ATCC VR-1525 / URRWXCal2) (Rickettsia azadi), this protein is Small ribosomal subunit protein uS3.